The sequence spans 62 residues: Small ribosomal subunit protein eS27 (62 aa).

Residues Cys-17, Cys-20, Cys-36, and Cys-39 each coordinate Zn(2+). The C4-type zinc-finger motif lies at 17–39; sequence CPDCENEQTIFDRACTPVDCIVC.

This sequence belongs to the eukaryotic ribosomal protein eS27 family. Part of the 30S ribosomal subunit. Zn(2+) serves as cofactor.

The chain is Small ribosomal subunit protein eS27 from Methanospirillum hungatei JF-1 (strain ATCC 27890 / DSM 864 / NBRC 100397 / JF-1).